Reading from the N-terminus, the 157-residue chain is Thioredoxin 2 (157 aa).

Residues 1–22 (MKHILALVVFIISFFCFKDVNC) form the signal peptide. The region spanning 46–157 (LRMYNKMPRL…ELTSTIRKHL (112 aa)) is the Thioredoxin domain. Catalysis depends on nucleophile residues C82 and C85. Cysteines 82 and 85 form a disulfide.

Belongs to the thioredoxin family. In terms of assembly, monomer. Component of the translocon PTEX complex composed of HSP101, EXP2, PTEX150, PTEX88 and TRX2. The disulfide bond between Cys-82 and Cys-85 acts as a redox-active center and is reduced by thioredoxin reductase TRXR.

Its function is as follows. Participates in various redox reactions through the reversible oxidation of its active center dithiol to a disulfide and catalyzes dithiol-disulfide exchange reactions. As part of the translocon PTEX complex, plays a role in the export of parasite proteins into the host erythrocyte. The translocon PTEX complex is a multi-protein machinery resident in the parasite parasitophorous vacuolar membrane, responsible for protein secretion into host cells. May contribute to the unfolding of proteins containing the PEXEL localization motif before their passage through the translocon or regulate the PTEX complex function. The polypeptide is Thioredoxin 2 (Plasmodium berghei (strain Anka)).